The sequence spans 273 residues: Cysteine protease S273R (273 aa).

Residues histidine 168 and asparagine 187 contribute to the active site. Glutamine 226 provides a ligand contact to substrate. The Nucleophile role is filled by cysteine 232.

It belongs to the peptidase C63 family.

It is found in the host cytoplasm. The protein localises to the virion. In terms of biological role, cysteine protease that plays several role during infection including processing of the structural polyprotein or inhibition of the host immune response. Catalyzes the maturation of the pp220 and pp62 polyprotein precursors into core-shell proteins. Plays a role in the disruption of host pyroptosis via specific cleavage of gasdermin D/GSDMD. In addition, strongly decreases the host cGAS-STING signaling by targeting IKBKE via its enzymatic activity. Also impairs host FOXJ1-mediated antiviral effect via degradation of FOXJ1. This African swine fever virus (isolate Tick/Malawi/Lil 20-1/1983) (ASFV) protein is Cysteine protease S273R.